The following is a 428-amino-acid chain: Adenylosuccinate synthetase (428 aa).

GTP contacts are provided by residues G12–K18 and G40–S42. The active-site Proton acceptor is D13. Mg(2+) is bound by residues D13 and G40. IMP-binding positions include D13–K16, N38–H41, T128, R142, Q223, T238, and R302. Catalysis depends on H41, which acts as the Proton donor. V298–R304 is a binding site for substrate. Residues R304, K330–D332, and G412–G414 contribute to the GTP site.

Belongs to the adenylosuccinate synthetase family. Homodimer. It depends on Mg(2+) as a cofactor.

The protein resides in the cytoplasm. It catalyses the reaction IMP + L-aspartate + GTP = N(6)-(1,2-dicarboxyethyl)-AMP + GDP + phosphate + 2 H(+). The protein operates within purine metabolism; AMP biosynthesis via de novo pathway; AMP from IMP: step 1/2. In terms of biological role, plays an important role in the de novo pathway of purine nucleotide biosynthesis. Catalyzes the first committed step in the biosynthesis of AMP from IMP. The polypeptide is Adenylosuccinate synthetase (Bifidobacterium longum (strain DJO10A)).